The chain runs to 678 residues: DNA ligase (678 aa).

NAD(+)-binding positions include D47–D51, S96–L97, and E122. K124 acts as the N6-AMP-lysine intermediate in catalysis. NAD(+) contacts are provided by R145, E182, K300, and K324. Zn(2+) contacts are provided by C418, C421, C436, and C442. A BRCT domain is found at A602–L678.

It belongs to the NAD-dependent DNA ligase family. LigA subfamily. It depends on Mg(2+) as a cofactor. Mn(2+) serves as cofactor.

It carries out the reaction NAD(+) + (deoxyribonucleotide)n-3'-hydroxyl + 5'-phospho-(deoxyribonucleotide)m = (deoxyribonucleotide)n+m + AMP + beta-nicotinamide D-nucleotide.. DNA ligase that catalyzes the formation of phosphodiester linkages between 5'-phosphoryl and 3'-hydroxyl groups in double-stranded DNA using NAD as a coenzyme and as the energy source for the reaction. It is essential for DNA replication and repair of damaged DNA. This Francisella tularensis subsp. holarctica (strain LVS) protein is DNA ligase.